A 225-amino-acid chain; its full sequence is Protein-L-isoaspartate O-methyltransferase 2 (225 aa).

Serine 73 is an active-site residue.

The protein belongs to the methyltransferase superfamily. L-isoaspartyl/D-aspartyl protein methyltransferase family.

It localises to the cytoplasm. The catalysed reaction is [protein]-L-isoaspartate + S-adenosyl-L-methionine = [protein]-L-isoaspartate alpha-methyl ester + S-adenosyl-L-homocysteine. Functionally, catalyzes the methyl esterification of L-isoaspartyl residues in peptides and proteins that result from spontaneous decomposition of normal L-aspartyl and L-asparaginyl residues. It plays a role in the repair and/or degradation of damaged proteins. This is Protein-L-isoaspartate O-methyltransferase 2 from Pelobacter propionicus (strain DSM 2379 / NBRC 103807 / OttBd1).